A 107-amino-acid polypeptide reads, in one-letter code: Integration host factor subunit beta (107 aa).

The segment at 56-107 (RPSRVGRNPKSGEKVLVPEKHVPHFKPGKELRERVDRNAGEPLKADAADDDL) is disordered. The segment covering 65 to 107 (KSGEKVLVPEKHVPHFKPGKELRERVDRNAGEPLKADAADDDL) has biased composition (basic and acidic residues).

The protein belongs to the bacterial histone-like protein family. In terms of assembly, heterodimer of an alpha and a beta chain.

Its function is as follows. This protein is one of the two subunits of integration host factor, a specific DNA-binding protein that functions in genetic recombination as well as in transcriptional and translational control. The sequence is that of Integration host factor subunit beta from Paraburkholderia phymatum (strain DSM 17167 / CIP 108236 / LMG 21445 / STM815) (Burkholderia phymatum).